The sequence spans 154 residues: Low molecular weight protein-tyrosine-phosphatase PtpA (154 aa).

The Nucleophile role is filled by C8. R14 is a catalytic residue. D120 (proton donor) is an active-site residue.

The protein belongs to the low molecular weight phosphotyrosine protein phosphatase family.

It carries out the reaction O-phospho-L-tyrosyl-[protein] + H2O = L-tyrosyl-[protein] + phosphate. Its function is as follows. Dephosphorylates the phosphotyrosine-containing proteins. The protein is Low molecular weight protein-tyrosine-phosphatase PtpA (ptpA) of Staphylococcus epidermidis (strain ATCC 35984 / DSM 28319 / BCRC 17069 / CCUG 31568 / BM 3577 / RP62A).